Reading from the N-terminus, the 102-residue chain is Aspartyl/glutamyl-tRNA(Asn/Gln) amidotransferase subunit C (102 aa).

Belongs to the GatC family. Heterotrimer of A, B and C subunits.

It catalyses the reaction L-glutamyl-tRNA(Gln) + L-glutamine + ATP + H2O = L-glutaminyl-tRNA(Gln) + L-glutamate + ADP + phosphate + H(+). The enzyme catalyses L-aspartyl-tRNA(Asn) + L-glutamine + ATP + H2O = L-asparaginyl-tRNA(Asn) + L-glutamate + ADP + phosphate + 2 H(+). Its function is as follows. Allows the formation of correctly charged Asn-tRNA(Asn) or Gln-tRNA(Gln) through the transamidation of misacylated Asp-tRNA(Asn) or Glu-tRNA(Gln) in organisms which lack either or both of asparaginyl-tRNA or glutaminyl-tRNA synthetases. The reaction takes place in the presence of glutamine and ATP through an activated phospho-Asp-tRNA(Asn) or phospho-Glu-tRNA(Gln). The protein is Aspartyl/glutamyl-tRNA(Asn/Gln) amidotransferase subunit C of Bordetella parapertussis (strain 12822 / ATCC BAA-587 / NCTC 13253).